The sequence spans 279 residues: Dermonecrotic toxin StSicTox-betaIB1i (279 aa).

Residue histidine 12 is part of the active site. Residues glutamate 32 and aspartate 34 each contribute to the Mg(2+) site. Histidine 48 (nucleophile) is an active-site residue. Disulfide bonds link cysteine 52–cysteine 58 and cysteine 54–cysteine 198. Residue aspartate 92 coordinates Mg(2+).

Belongs to the arthropod phospholipase D family. Class II subfamily. Class IIb sub-subfamily. Mg(2+) is required as a cofactor. In terms of tissue distribution, expressed by the venom gland.

The protein localises to the secreted. The enzyme catalyses an N-(acyl)-sphingosylphosphocholine = an N-(acyl)-sphingosyl-1,3-cyclic phosphate + choline. It carries out the reaction N-hexanoyl-sphing-4-enine-1-phosphocholine = N-(hexanoyl)-sphing-4-enine-1,3-cyclic phosphate + choline. The catalysed reaction is an N-(acyl)-sphingosylphosphoethanolamine = an N-(acyl)-sphingosyl-1,3-cyclic phosphate + ethanolamine. It catalyses the reaction N-dodecanoyl-heptadecasphing-4-enine-1-phosphoethanolamine = N-dodecanoyl-heptadecasphing-4-enine-1,3-cyclic phosphate + ethanolamine. The enzyme catalyses a 1-acyl-sn-glycero-3-phosphoethanolamine = a 1-acyl-sn-glycero-2,3-cyclic phosphate + ethanolamine. It carries out the reaction 1-tetradecanoyl-sn-glycero-3-phosphoethanolamine = 1-tetradecanoyl-sn-glycero-2,3-cyclic phosphate + ethanolamine. Functionally, dermonecrotic toxins cleave the phosphodiester linkage between the phosphate and headgroup of certain phospholipids (sphingolipid and lysolipid substrates), forming an alcohol (often choline) and a cyclic phosphate. This toxin acts on lysophosphatidylethanolamine (LPE) and ceramide phosphoethanolamine (CPE) with high activity. This toxin acts on sphingomyelin (SM) with very low activity and is not active on lysophosphatidylserine (LPS), lysophosphatidylcholine (LPC) and lysophosphatidylglycerol (LPG). It acts by transphosphatidylation, releasing exclusively cyclic phosphate as second products. It is not surprising that spider toxins have affinity for ethanolamine-containing sphingolipids since they are common in insect prey. Induces dermonecrosis, hemolysis, increased vascular permeability, edema, inflammatory response, and platelet aggregation. The protein is Dermonecrotic toxin StSicTox-betaIB1i of Sicarius terrosus (Cave spider).